The sequence spans 183 residues: Large ribosomal subunit protein bL27m (183 aa).

A mitochondrion-targeting transit peptide spans 1 to 34 (MFLRPTSIPSAVSQIRAQLFAGPSSLASQIQVRW).

This sequence belongs to the bacterial ribosomal protein bL27 family.

It localises to the mitochondrion. This Cryptococcus neoformans var. neoformans serotype D (strain B-3501A) (Filobasidiella neoformans) protein is Large ribosomal subunit protein bL27m (RPL27).